Consider the following 906-residue polypeptide: Cadherin-2 (906 aa).

Positions 1-25 are cleaved as a signal peptide; it reads MCRIAGAPRTLLPLLAALLQASVEA. Positions 26-159 are excised as a propeptide; that stretch reads SGEIALCKTG…HSGALQRQKR (134 aa). 5 Cadherin domains span residues 160 to 267, 268 to 382, 383 to 497, 498 to 603, and 604 to 717; these read DWVI…RPEF, LHQV…PPEF, TAMT…NPYF, APNP…DNAP, and QVLP…RIVG. Residues 160 to 724 are Extracellular-facing; sequence DWVIPPINLP…IVGAGLGTGA (565 aa). Residue Glu-170 coordinates Ca(2+). Asn-190 carries an N-linked (GlcNAc...) asparagine glycan. Asp-226, Glu-228, Asp-259, Met-260, Asn-261, Asp-262, and Asn-263 together coordinate Ca(2+). Asn-273 carries an N-linked (GlcNAc...) asparagine glycan. Positions 293, 295, and 301 each coordinate Ca(2+). N-linked (GlcNAc...) asparagine glycosylation occurs at Asn-325. Asp-353 is a Ca(2+) binding site. N-linked (GlcNAc...) asparagine glycosylation is found at Asn-402, Asn-572, Asn-651, and Asn-692. Residues 725-745 form a helical membrane-spanning segment; it reads IIAILLCIIILLILVLMFVVW. Over 746 to 906 the chain is Cytoplasmic; sequence MKRRDKERQA…LADMYGGGDD (161 aa). A compositionally biased stretch (low complexity) spans 863 to 880; that stretch reads SGSTAGSLSSLNSSSSGG. Residues 863–883 are disordered; the sequence is SGSTAGSLSSLNSSSSGGDQD.

Homodimer (via extracellular region). Can also form heterodimers with other cadherins (via extracellular region). Dimerization occurs in trans, i.e. with a cadherin chain from another cell. Interacts with CDCP1. Interacts with PCDH8; this complex may also include TAOK2. The interaction with PCDH8 may lead to internalization through TAOK2/p38 MAPK pathway. Identified in a complex containing FGFR4, NCAM1, CDH2, PLCG1, FRS2, SRC, SHC1, GAP43 and CTTN. May interact with OBSCN (via protein kinase domain 2). Interacts with FBXO45. Post-translationally, cleaved by MMP24. Ectodomain cleavage leads to the generation of a soluble 90 kDa N-terminal soluble fragment and a 45 kDa membrane-bound C-terminal fragment 1 (CTF1), which is further cleaved by gamma-secretase into a 35 kDa. Cleavage in neural stem cells by MMP24 affects CDH2-mediated anchorage of neural stem cells to ependymocytes in the adult subependymal zone, leading to modulate neural stem cell quiescence. In terms of processing, may be phosphorylated by OBSCN. O-glycosylated on Ser and Thr residues. In terms of tissue distribution, expressed in cardiac muscle (at protein level).

It localises to the cell membrane. It is found in the sarcolemma. The protein localises to the cell junction. Its subcellular location is the adherens junction. The protein resides in the desmosome. It localises to the cell surface. Its function is as follows. Calcium-dependent cell adhesion protein; preferentially mediates homotypic cell-cell adhesion by dimerization with a CDH2 chain from another cell. Cadherins may thus contribute to the sorting of heterogeneous cell types. Acts as a regulator of neural stem cells quiescence by mediating anchorage of neural stem cells to ependymocytes in the adult subependymal zone: upon cleavage by MMP24, CDH2-mediated anchorage is affected, leading to modulate neural stem cell quiescence. Plays a role in cell-to-cell junction formation between pancreatic beta cells and neural crest stem (NCS) cells, promoting the formation of processes by NCS cells. Required for proper neurite branching. Required for pre- and postsynaptic organization. CDH2 may be involved in neuronal recognition mechanism. In hippocampal neurons, may regulate dendritic spine density. The sequence is that of Cadherin-2 (Cdh2) from Mus musculus (Mouse).